The primary structure comprises 689 residues: Transcription factor MYC2 (689 aa).

A JAZ-interaction domain region spans residues 94-172 (LQQRLQALID…VLRELNSLIS (79 aa)). Over residues 316-349 (NTVQTNSVPSSNSNKQIAYGNENNHPSGNGQSCY) the composition is skewed to polar residues. Disordered regions lie at residues 316–361 (NTVQ…PQQQ) and 420–519 (QSQF…EAER). Residues 350–361 (NQQQQKNPPQQQ) show a composition bias toward low complexity. The span at 471–495 (DSEHSDLEASVVKEADSSRVVEPEK) shows a compositional bias: basic and acidic residues. Basic residues predominate over residues 496 to 505 (RPRKRGRKPA). Basic and acidic residues predominate over residues 506–519 (NGREEPLNHVEAER). Residues 509-522 (EEPLNHVEAERQRR) are basic motif; degenerate. Residues 509–558 (EEPLNHVEAERQRREKLNQRFYALRAVVPNVSKMDKASLLGDAISYINEL) form the bHLH domain. Positions 523–558 (EKLNQRFYALRAVVPNVSKMDKASLLGDAISYINEL) are helix-loop-helix motif. The segment at 563 to 602 (QNTESDKEDLKSQIEDLKKESRRPGPPPPPNQDLKMSSHT) is disordered. A compositionally biased stretch (basic and acidic residues) spans 566–585 (ESDKEDLKSQIEDLKKESRR).

In terms of assembly, interacts (via N-terminus) with MED25. Interacts (via N-terminus) with JAZ7. MED25 and JAZ7 compete with each other to bind to MYC2. Interacts (via N-terminus) with MTB1. MTB1 and MED25 compete with each other to bind to MYC2. As to expression, expressed at low levels in roots, stems, leaves, flowers and fruits.

The protein localises to the nucleus. Transcriptional activator that binds to the G-box motif (5'-AACGTG-3') found in the promoter of the jasmonate-induced gene LAPA1. Acts as a negative regulator of blue light-mediated photomorphogenesis and positively regulates root growth. Promotes growth in response to the phytohormones abscisic acid (ABA) and jasmonate (JA). Binds to the G-box motif (5'-CACGTG-3') of the RBCS-3A gene promoter. Acts downstream of the jasmonate (JA) receptor to orchestrate JA-mediated activation of plant responses. Positively regulates both wound-responsive and pathogen-responsive genes through MYC2-targeted transcription factors (MTFs) involved in early response to JA. With JA2L forms a transcription module that regulates wounding-responsive genes. With ERF.C3 forms a transcription module that regulates pathogen-responsive genes. Plays a critical role in orchestrating JA-mediated defense gene expression during Botrytis cinerea infection. Negatively regulates defense responses to root-knot nematodes, potentially by mediating crosstalk among the hormones strigolactones, abscisic acid (ABA) and jasmonate (JA). Regulates the termination of JA-mediated defense responses by specifically binding the G-box (5'-CACATG-3') motifs in the promoters of MTB1, MTB2 and MTB3, which are transcription factors that negatively regulates JA signaling. May be involved in JA-induced chilling tolerance, possibly by ameliorating the antioxidant enzyme system of fruit and increasing proline and lycopene levels. This is Transcription factor MYC2 from Solanum lycopersicum (Tomato).